Consider the following 263-residue polypeptide: Hydroxyethylthiazole kinase (263 aa).

Residue Met-45 participates in substrate binding. Arg-121 and Ser-167 together coordinate ATP. Gly-194 is a binding site for substrate.

This sequence belongs to the Thz kinase family. Mg(2+) is required as a cofactor.

The catalysed reaction is 5-(2-hydroxyethyl)-4-methylthiazole + ATP = 4-methyl-5-(2-phosphooxyethyl)-thiazole + ADP + H(+). Its pathway is cofactor biosynthesis; thiamine diphosphate biosynthesis; 4-methyl-5-(2-phosphoethyl)-thiazole from 5-(2-hydroxyethyl)-4-methylthiazole: step 1/1. Functionally, catalyzes the phosphorylation of the hydroxyl group of 4-methyl-5-beta-hydroxyethylthiazole (THZ). This chain is Hydroxyethylthiazole kinase, found in Vibrio parahaemolyticus serotype O3:K6 (strain RIMD 2210633).